The following is a 394-amino-acid chain: MKRNPHFVSLTKNYLFADLQKRVAQFRLENPQHTVINLSIGDTTQPLNASVAEAFASSIARLSSPTTCRGYGPDFGLPALRQKLSEDFYRGFVDAKEIFISDGAKVDLFRLLSFFGPNQTVAIQDPSYPAYLDIARLTGAKEIIALPCLQENAFFPEFPEDTHIDILCLCSPNNPTGTVLNKDQLRAIVHYAIEHEILILFDAAYSTFISDPSLPKSIFEIPDARFCAIEINSFSKPLGFAGIRLGWTVIPQELTYADGHFVIQDWERFLSTTFNGASIPAQEAGVAGLSILPQLEAIHYYRENSDLLRKALLATGFEVFGGEHAPYLWVKPTQANISDRDLFDFFLREYHIAITPGIGFGRSGSGFVRFSSLGKREDILAACERLQMAPALQS.

Tyr-14 and Gly-41 together coordinate substrate. Pyridoxal 5'-phosphate-binding positions include Tyr-71, 104 to 105 (AK), Tyr-128, Asn-174, Tyr-205, and 233 to 235 (SFS). Substrate-binding residues include Lys-105, Tyr-128, and Asn-174. Lys-236 carries the post-translational modification N6-(pyridoxal phosphate)lysine. Residues Arg-244 and Asn-275 each coordinate pyridoxal 5'-phosphate. Positions 275 and 369 each coordinate substrate.

The protein belongs to the class-I pyridoxal-phosphate-dependent aminotransferase family. LL-diaminopimelate aminotransferase subfamily. Homodimer. It depends on pyridoxal 5'-phosphate as a cofactor.

The catalysed reaction is (2S,6S)-2,6-diaminopimelate + 2-oxoglutarate = (S)-2,3,4,5-tetrahydrodipicolinate + L-glutamate + H2O + H(+). Its pathway is amino-acid biosynthesis; L-lysine biosynthesis via DAP pathway; LL-2,6-diaminopimelate from (S)-tetrahydrodipicolinate (aminotransferase route): step 1/1. Functionally, involved in the synthesis of meso-diaminopimelate (m-DAP or DL-DAP), required for both lysine and peptidoglycan biosynthesis. Catalyzes the direct conversion of tetrahydrodipicolinate to LL-diaminopimelate. Is also able to use meso-diaminopimelate, cystathionine, lysine or ornithine as substrates. The polypeptide is LL-diaminopimelate aminotransferase (Chlamydia trachomatis serovar D (strain ATCC VR-885 / DSM 19411 / UW-3/Cx)).